The sequence spans 550 residues: Hydroxylamine reductase (550 aa).

[4Fe-4S] cluster contacts are provided by C7, C10, C19, and C25. Residues H244, E268, C312, C405, C433, C458, E493, and K495 each coordinate hybrid [4Fe-2O-2S] cluster. C405 carries the post-translational modification Cysteine persulfide.

The protein belongs to the HCP family. The cofactor is [4Fe-4S] cluster. Requires hybrid [4Fe-2O-2S] cluster as cofactor.

It is found in the cytoplasm. The enzyme catalyses A + NH4(+) + H2O = hydroxylamine + AH2 + H(+). Its function is as follows. Catalyzes the reduction of hydroxylamine to form NH(3) and H(2)O. This Porphyromonas gingivalis (strain ATCC BAA-308 / W83) protein is Hydroxylamine reductase.